We begin with the raw amino-acid sequence, 89 residues long: MFKLAIILALLFFGARAGAVRDGYPILSDGCKYTCKPLGENQNCSRICKEKAGSWYGYCYMWACYCTDVSKKAVLFGDSGTPECHVWIK.

Residues 1–17 form the signal peptide; it reads MFKLAIILALLFFGARA. The region spanning 21–85 is the LCN-type CS-alpha/beta domain; it reads RDGYPILSDG…FGDSGTPECH (65 aa). 4 disulfides stabilise this stretch: C31-C84, C35-C59, C44-C64, and C48-C66.

In terms of tissue distribution, expressed by the venom gland.

It localises to the secreted. This is Putative sodium channel toxin Ts30 from Tityus serrulatus (Brazilian scorpion).